The following is a 103-amino-acid chain: Small ribosomal subunit protein uS10 (103 aa).

It belongs to the universal ribosomal protein uS10 family. As to quaternary structure, part of the 30S ribosomal subunit.

In terms of biological role, involved in the binding of tRNA to the ribosomes. This is Small ribosomal subunit protein uS10 from Chlorobium chlorochromatii (strain CaD3).